A 235-amino-acid polypeptide reads, in one-letter code: Large ribosomal subunit protein uL1 (235 aa).

This sequence belongs to the universal ribosomal protein uL1 family. Part of the 50S ribosomal subunit.

In terms of biological role, binds directly to 23S rRNA. The L1 stalk is quite mobile in the ribosome, and is involved in E site tRNA release. Its function is as follows. Protein L1 is also a translational repressor protein, it controls the translation of the L11 operon by binding to its mRNA. This is Large ribosomal subunit protein uL1 from Symbiobacterium thermophilum (strain DSM 24528 / JCM 14929 / IAM 14863 / T).